A 122-amino-acid polypeptide reads, in one-letter code: uncharacterized protein (122 aa).

This is an uncharacterized protein from Saccharomyces cerevisiae (strain ATCC 204508 / S288c) (Baker's yeast).